The sequence spans 843 residues: Beta-mannosidase B (843 aa).

The Proton donor role is filled by Glu-430. A glycan (N-linked (GlcNAc...) asparagine) is linked at Asn-721.

Belongs to the glycosyl hydrolase 2 family. Beta-mannosidase B subfamily.

The enzyme catalyses Hydrolysis of terminal, non-reducing beta-D-mannose residues in beta-D-mannosides.. Its pathway is glycan metabolism; N-glycan degradation. Its function is as follows. Exoglycosidase that cleaves the single beta-linked mannose residue from the non-reducing end of beta-mannosidic oligosaccharides of various complexity and length. Prefers mannobiose over mannotriose and has no activity against polymeric mannan. Is also severely restricted by galactosyl substitutions at the +1 subsite. This is Beta-mannosidase B (mndB) from Aspergillus terreus (strain NIH 2624 / FGSC A1156).